The following is a 194-amino-acid chain: MREATVERATAETWVRLRLGLDGPTGGKVDTGLPFLDHMLLQLQRHGRFLLEVEARGDLEVDVHHLVEDVGIALGMALKEALGDGVGLERYAEAFAPMDETLVLCVLDLSGRPHLEFRPEAWPVVGEAGGVNHYHLREFLRGLVNHGRLTLHLRLLSGREAHHVVEASFKALARALHKATRRTGEGVPSTKGVL.

This sequence belongs to the imidazoleglycerol-phosphate dehydratase family.

The protein resides in the cytoplasm. The catalysed reaction is D-erythro-1-(imidazol-4-yl)glycerol 3-phosphate = 3-(imidazol-4-yl)-2-oxopropyl phosphate + H2O. Its pathway is amino-acid biosynthesis; L-histidine biosynthesis; L-histidine from 5-phospho-alpha-D-ribose 1-diphosphate: step 6/9. The polypeptide is Imidazoleglycerol-phosphate dehydratase (Thermus thermophilus (strain ATCC BAA-163 / DSM 7039 / HB27)).